A 266-amino-acid chain; its full sequence is Calpain small subunit 1 (266 aa).

Residue Met1 is modified to N-acetylmethionine. A Phosphoserine modification is found at Ser6. The EF-hand 1; atypical domain maps to 94–128 (EEVRQFRRLFAQLAGDDMEVSATELMNILNKVVTR). 10 residues coordinate Ca(2+): Ala107, Asp110, Glu112, Glu117, Asp135, Asp150, Asp152, Thr154, Lys156, and Glu161. EF-hand domains are found at residues 137–170 (FGID…NNIK), 167–202 (NNIK…AGFH), 203–231 (LNEH…ISCL), and 232–266 (VRLD…TMYS). Lys177 carries the post-translational modification N6-acetyllysine. 6 residues coordinate Ca(2+): Asp180, Asp182, Ser184, Thr186, Glu191, and Asp223.

As to quaternary structure, homodimer or heterodimer of a large (catalytic) and a small (regulatory) subunit. In presence of calcium, the heterodimer dissociates.

The protein resides in the cytoplasm. The protein localises to the cell membrane. Functionally, regulatory subunit of the calcium-regulated non-lysosomal thiol-protease which catalyzes limited proteolysis of substrates involved in cytoskeletal remodeling and signal transduction. Essential for embryonic development. The sequence is that of Calpain small subunit 1 (CAPNS1) from Sus scrofa (Pig).